A 312-amino-acid chain; its full sequence is DNA-directed RNA polymerase subunit alpha (312 aa).

The tract at residues 1-226 (MIEFEKPKIT…DHLNLFVDLS (226 aa)) is alpha N-terminal domain (alpha-NTD). The interval 243 to 312 (TERVLDKIIE…ELGLSLKKRK (70 aa)) is alpha C-terminal domain (alpha-CTD).

The protein belongs to the RNA polymerase alpha chain family. In terms of assembly, homodimer. The RNAP catalytic core consists of 2 alpha, 1 beta, 1 beta' and 1 omega subunit. When a sigma factor is associated with the core the holoenzyme is formed, which can initiate transcription.

The enzyme catalyses RNA(n) + a ribonucleoside 5'-triphosphate = RNA(n+1) + diphosphate. Functionally, DNA-dependent RNA polymerase catalyzes the transcription of DNA into RNA using the four ribonucleoside triphosphates as substrates. The chain is DNA-directed RNA polymerase subunit alpha from Lactococcus lactis subsp. cremoris (strain SK11).